Consider the following 503-residue polypeptide: Probable cytosol aminopeptidase (503 aa).

Mn(2+)-binding residues include Lys-268 and Asp-273. Lys-280 is an active-site residue. Mn(2+) contacts are provided by Asp-291, Asp-350, and Glu-352. Residue Arg-354 is part of the active site.

Belongs to the peptidase M17 family. Requires Mn(2+) as cofactor.

It localises to the cytoplasm. The enzyme catalyses Release of an N-terminal amino acid, Xaa-|-Yaa-, in which Xaa is preferably Leu, but may be other amino acids including Pro although not Arg or Lys, and Yaa may be Pro. Amino acid amides and methyl esters are also readily hydrolyzed, but rates on arylamides are exceedingly low.. The catalysed reaction is Release of an N-terminal amino acid, preferentially leucine, but not glutamic or aspartic acids.. Presumably involved in the processing and regular turnover of intracellular proteins. Catalyzes the removal of unsubstituted N-terminal amino acids from various peptides. This chain is Probable cytosol aminopeptidase, found in Herminiimonas arsenicoxydans.